The chain runs to 944 residues: LPS-assembly protein LptD (944 aa).

The first 33 residues, 1–33, serve as a signal peptide directing secretion; sequence MALKSPAFRRKFPLLVTGGLLALQPLATSFVVA. Residues 52-102 form a disordered region; sequence KATGNLPPRPVHPGAAAASSGAEAPGEVGEAQAEKPMLVTESKGRGLKSRS. A compositionally biased stretch (low complexity) spans 64 to 82; it reads PGAAAASSGAEAPGEVGEA.

The protein belongs to the LptD family. Component of the lipopolysaccharide transport and assembly complex. Interacts with LptE and LptA.

Its subcellular location is the cell outer membrane. Its function is as follows. Together with LptE, is involved in the assembly of lipopolysaccharide (LPS) at the surface of the outer membrane. In Pseudomonas entomophila (strain L48), this protein is LPS-assembly protein LptD.